Consider the following 380-residue polypeptide: Putative RNA ligase (380 aa).

Functionally, putative RNA ligase. Is able to catalyze the adenylation reaction of ssDNA 3'-terminal phosphate (ssDNA 3'p) to 3'-adenylated DNA (ssDNA 3'pp5'A). This is Putative RNA ligase from Thermovibrio ammonificans (strain DSM 15698 / JCM 12110 / HB-1).